The chain runs to 227 residues: 7-cyano-7-deazaguanine synthase (227 aa).

Position 8 to 18 (8 to 18 (VSGGADSATVL)) interacts with ATP. The Zn(2+) site is built by cysteine 192, cysteine 202, cysteine 205, and cysteine 208.

The protein belongs to the QueC family. Zn(2+) is required as a cofactor.

It catalyses the reaction 7-carboxy-7-deazaguanine + NH4(+) + ATP = 7-cyano-7-deazaguanine + ADP + phosphate + H2O + H(+). The protein operates within purine metabolism; 7-cyano-7-deazaguanine biosynthesis. Functionally, catalyzes the ATP-dependent conversion of 7-carboxy-7-deazaguanine (CDG) to 7-cyano-7-deazaguanine (preQ(0)). The protein is 7-cyano-7-deazaguanine synthase of Rickettsia akari (strain Hartford).